Reading from the N-terminus, the 89-residue chain is Small ribosomal subunit protein uS15 (89 aa).

This sequence belongs to the universal ribosomal protein uS15 family. As to quaternary structure, part of the 30S ribosomal subunit. Forms a bridge to the 50S subunit in the 70S ribosome, contacting the 23S rRNA.

Its function is as follows. One of the primary rRNA binding proteins, it binds directly to 16S rRNA where it helps nucleate assembly of the platform of the 30S subunit by binding and bridging several RNA helices of the 16S rRNA. Functionally, forms an intersubunit bridge (bridge B4) with the 23S rRNA of the 50S subunit in the ribosome. The polypeptide is Small ribosomal subunit protein uS15 (Prosthecochloris aestuarii (strain DSM 271 / SK 413)).